The primary structure comprises 101 residues: NADH-quinone oxidoreductase subunit K (101 aa).

The next 3 membrane-spanning stretches (helical) occupy residues 5–25 (LGQVLMLAGLLFVAGLVGVLL), 29–49 (LIMILIGVEIMLNAVGLVLVG), and 62–82 (VALLLMAVAAAEVTIALALVV).

It belongs to the complex I subunit 4L family. NDH-1 is composed of 14 different subunits. Subunits NuoA, H, J, K, L, M, N constitute the membrane sector of the complex.

It localises to the cell inner membrane. It catalyses the reaction a quinone + NADH + 5 H(+)(in) = a quinol + NAD(+) + 4 H(+)(out). In terms of biological role, NDH-1 shuttles electrons from NADH, via FMN and iron-sulfur (Fe-S) centers, to quinones in the respiratory chain. The immediate electron acceptor for the enzyme in this species is believed to be ubiquinone. Couples the redox reaction to proton translocation (for every two electrons transferred, four hydrogen ions are translocated across the cytoplasmic membrane), and thus conserves the redox energy in a proton gradient. The sequence is that of NADH-quinone oxidoreductase subunit K from Syntrophotalea carbinolica (strain DSM 2380 / NBRC 103641 / GraBd1) (Pelobacter carbinolicus).